Reading from the N-terminus, the 359-residue chain is Peptide chain release factor 1 (359 aa).

Glutamine 235 bears the N5-methylglutamine mark. The segment at glutamine 283 to tyrosine 309 is disordered.

The protein belongs to the prokaryotic/mitochondrial release factor family. In terms of processing, methylated by PrmC. Methylation increases the termination efficiency of RF1.

It is found in the cytoplasm. Peptide chain release factor 1 directs the termination of translation in response to the peptide chain termination codons UAG and UAA. In Brucella abortus (strain S19), this protein is Peptide chain release factor 1.